A 401-amino-acid polypeptide reads, in one-letter code: Acetate kinase (401 aa).

Asn7 lines the Mg(2+) pocket. Residue Lys14 coordinates ATP. Arg90 contacts substrate. The active-site Proton donor/acceptor is Asp147. Residues 207–211, 282–284, and 330–334 contribute to the ATP site; these read HLGNG, DFR, and GVGEN. Glu383 serves as a coordination point for Mg(2+).

The protein belongs to the acetokinase family. Homodimer. Mg(2+) is required as a cofactor. It depends on Mn(2+) as a cofactor.

The protein localises to the cytoplasm. The enzyme catalyses acetate + ATP = acetyl phosphate + ADP. Its pathway is metabolic intermediate biosynthesis; acetyl-CoA biosynthesis; acetyl-CoA from acetate: step 1/2. Functionally, catalyzes the formation of acetyl phosphate from acetate and ATP. Can also catalyze the reverse reaction. The protein is Acetate kinase of Clostridium novyi (strain NT).